A 333-amino-acid chain; its full sequence is Complement C1q and tumor necrosis factor-related protein 9B (333 aa).

An N-terminal signal peptide occupies residues 1–19; the sequence is MRIWWLLLAIEICTGNINS. 3 Collagen-like domains span residues 24-82, 95-154, and 155-191; these read RQGH…DGKV, GSPG…PGPM, and GPIG…GEKG. The tract at residues 24 to 189 is disordered; it reads RQGHPGIPGN…IRGWKGDRGE (166 aa). The segment covering 26-40 has biased composition (low complexity); the sequence is GHPGIPGNPGHNGLP. 2 stretches are compositionally biased toward basic and acidic residues: residues 42–55 and 69–88; these read RDGR…KGDA and TSGE…KGIK. The C1q domain occupies 197 to 333; sequence LVLPKSAFTV…FTGFLLFSSQ (137 aa).

As to quaternary structure, interacts with CTRP9A and ADIPOQ. Forms heterotrimers and heterooligomeric complexes with CTRP9A. In terms of tissue distribution, expressed at low levels. Not expressed in adipose tissues.

It is found in the secreted. In terms of biological role, probable adipokine. Activates AMPK, AKT, and p44/42 MAPK signaling pathways. The polypeptide is Complement C1q and tumor necrosis factor-related protein 9B (C1QTNF9B) (Homo sapiens (Human)).